The sequence spans 1889 residues: E3 ubiquitin-protein ligase UBR3 (1889 aa).

Positions 1 to 27 are disordered; the sequence is MAAAAAAAAVGDPQPPQPEAPAQGLAL. Residues 118-189 form a UBR-type zinc finger; it reads ALCGLVWTAN…ESGFCRRHQI (72 aa). The tract at residues 338–362 is disordered; that stretch reads LGQIDSSDEEDQDGSQGLGKRKRVK. S343 and S344 each carry phosphoserine. 2 helical membrane passes run 761-781 and 919-939; these read MLEG…HLGM and LLHC…ILMD. The stretch at 1167-1199 forms a coiled coil; that stretch reads KKITAAEKKTLDKEERRQKARERQQKLLAEFAS. Phosphoserine is present on S1199. Residues 1306-1364 form an RING-type; degenerate zinc finger; it reads DSSCLLAVSIGWEGGVYVQTCGHTLHIDCHKSYMESLRNDQVLQGFSVDKGEFTCPLCR. A helical membrane pass occupies residues 1807–1827; it reads QNCGAGTGIFLLINASVIIII.

This sequence belongs to the E3 ubiquitin-protein ligase UBR1-like family. As to quaternary structure, interacts with UBE2A and UBE2B. In terms of tissue distribution, expressed in numerous cells of the smell, touch, vision, hearing and taste senses. Expressed in cells of the olfactory pathway, including the olfactory cell layer of the main olfactory epithelium (MOE), a mitral neuron cell layer of the olfactory bulb (OB), and a pyramidal cell layer of the piriform cortex of the olfactory cortex (OC). Expressed in the vomeronasal sensory epithelium of the vomeronasal organ (VNO) and the mitral cells of the accessory olfactory bulb. Expressed in tactile tissues, including the dorsal root ganglion, trigeminal ganglion and follicle-sinus complexes. Expressed in cells between hair follicle and sinus and also in the region of the rete ridge collar. Expressed in taste buds of the fungiform, circumvallate, and foliate papillae. Expressed in the spiral ganglion, the organ of Corti of the cochlea in the inner ear, in the sensory epithelium of macula and vestibular ganglion of the balancing system (at protein level). Expressed in the liver and skeletal muscle.

It localises to the membrane. It carries out the reaction S-ubiquitinyl-[E2 ubiquitin-conjugating enzyme]-L-cysteine + [acceptor protein]-L-lysine = [E2 ubiquitin-conjugating enzyme]-L-cysteine + N(6)-ubiquitinyl-[acceptor protein]-L-lysine.. It participates in protein modification; protein ubiquitination. E3 ubiquitin-protein ligase which is a component of the N-end rule pathway. Does not bind to proteins bearing specific N-terminal residues that are destabilizing according to the N-end rule, leading to their ubiquitination and subsequent degradation. May play a role in Shh signaling by mediating the ubiquitination of Kif7. May be important for MYH9 function in certain tissues, possibly by regulating the ubiquitination of MYH9 and consequently affecting its interaction with MYO7A. This is E3 ubiquitin-protein ligase UBR3 (Ubr3) from Mus musculus (Mouse).